Reading from the N-terminus, the 445-residue chain is Phosphoglucosamine mutase (445 aa).

Ser-101 serves as the catalytic Phosphoserine intermediate. Positions 101, 240, 242, and 244 each coordinate Mg(2+). The residue at position 101 (Ser-101) is a Phosphoserine.

The protein belongs to the phosphohexose mutase family. Mg(2+) serves as cofactor. Activated by phosphorylation.

The catalysed reaction is alpha-D-glucosamine 1-phosphate = D-glucosamine 6-phosphate. Catalyzes the conversion of glucosamine-6-phosphate to glucosamine-1-phosphate. The protein is Phosphoglucosamine mutase of Ectopseudomonas mendocina (strain ymp) (Pseudomonas mendocina).